The primary structure comprises 236 residues: Leucyl/phenylalanyl-tRNA--protein transferase (236 aa).

It belongs to the L/F-transferase family.

It is found in the cytoplasm. The enzyme catalyses N-terminal L-lysyl-[protein] + L-leucyl-tRNA(Leu) = N-terminal L-leucyl-L-lysyl-[protein] + tRNA(Leu) + H(+). The catalysed reaction is N-terminal L-arginyl-[protein] + L-leucyl-tRNA(Leu) = N-terminal L-leucyl-L-arginyl-[protein] + tRNA(Leu) + H(+). It catalyses the reaction L-phenylalanyl-tRNA(Phe) + an N-terminal L-alpha-aminoacyl-[protein] = an N-terminal L-phenylalanyl-L-alpha-aminoacyl-[protein] + tRNA(Phe). Functions in the N-end rule pathway of protein degradation where it conjugates Leu, Phe and, less efficiently, Met from aminoacyl-tRNAs to the N-termini of proteins containing an N-terminal arginine or lysine. In Shewanella putrefaciens (strain CN-32 / ATCC BAA-453), this protein is Leucyl/phenylalanyl-tRNA--protein transferase.